The primary structure comprises 122 residues: Large ribosomal subunit protein uL14 (122 aa).

Belongs to the universal ribosomal protein uL14 family. In terms of assembly, part of the 50S ribosomal subunit. Forms a cluster with proteins L3 and L19. In the 70S ribosome, L14 and L19 interact and together make contacts with the 16S rRNA in bridges B5 and B8.

Functionally, binds to 23S rRNA. Forms part of two intersubunit bridges in the 70S ribosome. The sequence is that of Large ribosomal subunit protein uL14 from Streptococcus equi subsp. equi (strain 4047).